The following is a 48-amino-acid chain: ATP synthase protein 8 (48 aa).

Residues 13 to 35 (LTYGFTFILTILFLTSYVFLPMI) form a helical membrane-spanning segment.

Belongs to the ATPase protein 8 family. As to quaternary structure, F-type ATPases have 2 components, CF(1) - the catalytic core - and CF(0) - the membrane proton channel. In yeast, the dimeric form of ATP synthase consists of 18 polypeptides: alpha, beta, gamma, delta, epsilon, 4 (B), 5 (OSCP), 6 (A), 8, 9 (C), d, E (Tim11), f, g, h, i, j and k.

The protein resides in the mitochondrion membrane. Mitochondrial membrane ATP synthase (F(1)F(0) ATP synthase or Complex V) produces ATP from ADP in the presence of a proton gradient across the membrane which is generated by electron transport complexes of the respiratory chain. F-type ATPases consist of two structural domains, F(1) - containing the extramembraneous catalytic core and F(0) - containing the membrane proton channel, linked together by a central stalk and a peripheral stalk. During catalysis, ATP synthesis in the catalytic domain of F(1) is coupled via a rotary mechanism of the central stalk subunits to proton translocation. Part of the complex F(0) domain. Minor subunit located with subunit a in the membrane. The chain is ATP synthase protein 8 (ATP8) from Eremothecium gossypii (strain ATCC 10895 / CBS 109.51 / FGSC 9923 / NRRL Y-1056) (Yeast).